Consider the following 165-residue polypeptide: Large ribosomal subunit protein uL10 (165 aa).

This sequence belongs to the universal ribosomal protein uL10 family. Part of the ribosomal stalk of the 50S ribosomal subunit. The N-terminus interacts with L11 and the large rRNA to form the base of the stalk. The C-terminus forms an elongated spine to which L12 dimers bind in a sequential fashion forming a multimeric L10(L12)X complex.

Functionally, forms part of the ribosomal stalk, playing a central role in the interaction of the ribosome with GTP-bound translation factors. This is Large ribosomal subunit protein uL10 from Dechloromonas aromatica (strain RCB).